The primary structure comprises 567 residues: MFS-type transporter poxA (567 aa).

The segment covering 1 to 23 (MPASDRTSETGDVEKVTAAETPK) has biased composition (basic and acidic residues). Positions 1–24 (MPASDRTSETGDVEKVTAAETPKE) are disordered. 10 helical membrane-spanning segments follow: residues 35-55 (ALTG…LFLG), 77-97 (ADIG…QLLA), 108-128 (LVFL…GVAV), 141-161 (GAGA…VVPL), 165-185 (SLIL…GPVI), 197-217 (WCFY…ILFF), 240-260 (LAGC…LQWG), 271-291 (SATI…FLIW), 311-331 (IIAS…VGYF), and 349-369 (VMLL…GVIV). A glycan (N-linked (GlcNAc...) asparagine) is linked at N370. 4 helical membrane passes run 372–392 (TGYF…GSGL), 410–430 (ILQG…QVAL), 436–456 (LIPV…SIML), and 515–535 (AIAG…LVSF). The disordered stretch occupies residues 547–567 (EENKKEAAEEEEEVKVAAVEA).

The protein belongs to the major facilitator superfamily. TCR/Tet family.

Its subcellular location is the cell membrane. MFS-type transporter; part of the gene cluster that mediates the biosynthesis of oxaleimides, cytotoxic compounds containing an unusual disubstituted succinimide moiety. In Penicillium oxalicum (strain 114-2 / CGMCC 5302) (Penicillium decumbens), this protein is MFS-type transporter poxA.